Reading from the N-terminus, the 473-residue chain is UDP-N-acetylmuramoylalanine--D-glutamate ligase (473 aa).

120 to 126 provides a ligand contact to ATP; it reads GSNGKTT.

It belongs to the MurCDEF family.

Its subcellular location is the cytoplasm. The enzyme catalyses UDP-N-acetyl-alpha-D-muramoyl-L-alanine + D-glutamate + ATP = UDP-N-acetyl-alpha-D-muramoyl-L-alanyl-D-glutamate + ADP + phosphate + H(+). The protein operates within cell wall biogenesis; peptidoglycan biosynthesis. Cell wall formation. Catalyzes the addition of glutamate to the nucleotide precursor UDP-N-acetylmuramoyl-L-alanine (UMA). This Nitrosospira multiformis (strain ATCC 25196 / NCIMB 11849 / C 71) protein is UDP-N-acetylmuramoylalanine--D-glutamate ligase.